The following is a 276-amino-acid chain: uncharacterized protein (276 aa).

Residues 20–137 form the AB hydrolase-1 domain; it reads PVLIFIPGAN…PPINTFLPDS (118 aa). A disordered region spans residues 57 to 76; that stretch reads GESELTEPLPDSASNPDSDY.

This sequence belongs to the AB hydrolase superfamily.

This is an uncharacterized protein from Staphylococcus aureus (strain MW2).